The primary structure comprises 435 residues: rRNA methyltransferase 3A, mitochondrial (435 aa).

The transit peptide at 1 to 42 (MAALMYNVSRGLVMLGERSLFQRERYQILVNSRRFLRGLRRR) directs the protein to the mitochondrion. Positions 314 to 324 (KQLVSGQTENV) are enriched in polar residues. The segment at 314–351 (KQLVSGQTENVSSDDYSESDSDDDDDEEEDEDSLPHVK) is disordered. The segment covering 328–345 (DYSESDSDDDDDEEEDED) has biased composition (acidic residues). 2 residues coordinate S-adenosyl-L-methionine: Gly-369 and Leu-402.

Belongs to the class IV-like SAM-binding methyltransferase superfamily. RNA methyltransferase TrmH family.

It localises to the mitochondrion. The catalysed reaction is a uridine in rRNA + S-adenosyl-L-methionine = a 2'-O-methyluridine in rRNA + S-adenosyl-L-homocysteine + H(+). Its function is as follows. S-adenosyl-L-methionine-dependent 2'-O-ribose methyltransferase that catalyzes the formation of 2'-O-methylguanosine at position 1485 (Gm1485) in the mitochondrial large subunit ribosomal RNA (mtLSU rRNA), a conserved modification in the peptidyl transferase domain of the mtLSU rRNA. Also required for formation of 2'-O-methyluridine at position 1484 (Um1484) mediated by MRM2. This Danio rerio (Zebrafish) protein is rRNA methyltransferase 3A, mitochondrial (mrm3a).